Here is a 422-residue protein sequence, read N- to C-terminus: Glutamate-1-semialdehyde 2,1-aminomutase (422 aa).

Lys-264 carries the post-translational modification N6-(pyridoxal phosphate)lysine.

This sequence belongs to the class-III pyridoxal-phosphate-dependent aminotransferase family. HemL subfamily. Homodimer. Pyridoxal 5'-phosphate is required as a cofactor.

It is found in the cytoplasm. The enzyme catalyses (S)-4-amino-5-oxopentanoate = 5-aminolevulinate. It functions in the pathway porphyrin-containing compound metabolism; protoporphyrin-IX biosynthesis; 5-aminolevulinate from L-glutamyl-tRNA(Glu): step 2/2. The chain is Glutamate-1-semialdehyde 2,1-aminomutase from Clostridium acetobutylicum (strain ATCC 824 / DSM 792 / JCM 1419 / IAM 19013 / LMG 5710 / NBRC 13948 / NRRL B-527 / VKM B-1787 / 2291 / W).